Reading from the N-terminus, the 418-residue chain is Tyrosine--tRNA ligase (418 aa).

Residue tyrosine 34 coordinates L-tyrosine. A 'HIGH' region motif is present at residues proline 39–histidine 48. L-tyrosine-binding residues include tyrosine 169 and glutamine 173. The 'KMSKS' region motif lies at lysine 229–serine 233. Lysine 232 provides a ligand contact to ATP. Residues leucine 352–tyrosine 418 form the S4 RNA-binding domain.

The protein belongs to the class-I aminoacyl-tRNA synthetase family. TyrS type 1 subfamily. Homodimer.

The protein resides in the cytoplasm. It carries out the reaction tRNA(Tyr) + L-tyrosine + ATP = L-tyrosyl-tRNA(Tyr) + AMP + diphosphate + H(+). Its function is as follows. Catalyzes the attachment of tyrosine to tRNA(Tyr) in a two-step reaction: tyrosine is first activated by ATP to form Tyr-AMP and then transferred to the acceptor end of tRNA(Tyr). This chain is Tyrosine--tRNA ligase, found in Streptococcus pyogenes serotype M12 (strain MGAS2096).